Reading from the N-terminus, the 29-residue chain is Cycloviolacin-O22 (29 aa).

Residues 1–29 (GLPICGETCVGGTCNTPGCTCSWPVCTRN) constitute a cross-link (cyclopeptide (Gly-Asn)). 3 cysteine pairs are disulfide-bonded: C5-C19, C9-C21, and C14-C26.

Post-translationally, this is a cyclic peptide. Expressed in roots and runners but not in leaves, petals and petioles (at protein level).

Functionally, probably participates in a plant defense mechanism. The protein is Cycloviolacin-O22 of Viola odorata (Sweet violet).